Consider the following 189-residue polypeptide: 3-isopropylmalate dehydratase small subunit (189 aa).

This sequence belongs to the LeuD family. LeuD type 1 subfamily. As to quaternary structure, heterodimer of LeuC and LeuD.

It catalyses the reaction (2R,3S)-3-isopropylmalate = (2S)-2-isopropylmalate. Its pathway is amino-acid biosynthesis; L-leucine biosynthesis; L-leucine from 3-methyl-2-oxobutanoate: step 2/4. Catalyzes the isomerization between 2-isopropylmalate and 3-isopropylmalate, via the formation of 2-isopropylmaleate. This Francisella philomiragia subsp. philomiragia (strain ATCC 25017 / CCUG 19701 / FSC 153 / O#319-036) protein is 3-isopropylmalate dehydratase small subunit.